The sequence spans 382 residues: Galactokinase (382 aa).

Residue 34 to 37 (EHTD) participates in substrate binding. ATP is bound at residue 124–130 (GAGLSSS). Ser130 and Glu162 together coordinate Mg(2+). Asp174 serves as the catalytic Proton acceptor. A substrate-binding site is contributed by Tyr223.

The protein belongs to the GHMP kinase family. GalK subfamily.

The protein localises to the cytoplasm. It catalyses the reaction alpha-D-galactose + ATP = alpha-D-galactose 1-phosphate + ADP + H(+). It participates in carbohydrate metabolism; galactose metabolism. In terms of biological role, catalyzes the transfer of the gamma-phosphate of ATP to D-galactose to form alpha-D-galactose-1-phosphate (Gal-1-P). The protein is Galactokinase of Escherichia coli O81 (strain ED1a).